Here is a 205-residue protein sequence, read N- to C-terminus: N-(5'-phosphoribosyl)anthranilate isomerase (205 aa).

Belongs to the TrpF family.

The catalysed reaction is N-(5-phospho-beta-D-ribosyl)anthranilate = 1-(2-carboxyphenylamino)-1-deoxy-D-ribulose 5-phosphate. The protein operates within amino-acid biosynthesis; L-tryptophan biosynthesis; L-tryptophan from chorismate: step 3/5. This is N-(5'-phosphoribosyl)anthranilate isomerase from Thermotoga petrophila (strain ATCC BAA-488 / DSM 13995 / JCM 10881 / RKU-1).